The chain runs to 941 residues: Probable respiratory burst oxidase homolog protein I (941 aa).

The Cytoplasmic portion of the chain corresponds to 1-374 (MSMSFSGGTH…LYSLQDNWKR (374 aa)). Disordered stretches follow at residues 29-48 (PSLP…SGEE) and 103-166 (ERLT…SGTE). The span at 36–45 (SPSPSSSSSS) shows a compositional bias: low complexity. Residues 103–117 (ERLTAGTNSKQQIQK) show a composition bias toward polar residues. 2 EF-hand-like regions span residues 196 to 204 (SKDGYLFKS) and 232 to 243 (RRIMVDKINLQE). One can recognise an EF-hand domain in the interval 254–289 (ESFDSRLQIFFNMVKNGDGRITENEVKEIIILSASA). Ca(2+)-binding residues include Asn269, Asp271, Arg273, and Glu278. A phosphoserine mark is found at Ser346 and Ser350. A helical membrane pass occupies residues 375-395 (IWVLTLWFVIMAWLFMWKCYQ). The Extracellular segment spans residues 396-407 (YKHKDAFHVMGY). A helical transmembrane segment spans residues 408-428 (CLVMAKGAAETLKFNMALILL). A Ferric oxidoreductase domain is found at 413–570 (KGAAETLKFN…LLLTVYVLLV (158 aa)). Residues 429–514 (PVCRNTITYL…YFGLVNTPVG (86 aa)) are Cytoplasmic-facing. Residues 515-535 (ITGIIMVAFMLIAFTLASRRC) traverse the membrane as a helical segment. The Extracellular segment spans residues 536–557 (RRNLTKLPKPFDKLTGYNAFWY). Residues 558 to 578 (SHHLLLTVYVLLVIHGVSLYL) traverse the membrane as a helical segment. Over 579–586 (EHKWYRKT) the chain is Cytoplasmic. Residues 587–604 (VWMYLAVPVLLYVGERIF) form a helical membrane-spanning segment. At 605 to 731 (RFFRSRLYTV…PYGAPAQDHW (127 aa)) the chain is on the extracellular side. Positions 609 to 729 (SRLYTVEICK…DGPYGAPAQD (121 aa)) constitute an FAD-binding FR-type domain. The helical transmembrane segment at 732–752 (KYDVVLLVGLGIGATPFVSIL) threads the bilayer. The Cytoplasmic segment spans residues 753–941 (RDLLNNIIKQ…TRFDFHKEQF (189 aa)).

The protein belongs to the RBOH (TC 5.B.1.3) family. Monomer and homodimer.

The protein resides in the membrane. Its function is as follows. Calcium-dependent NADPH oxidase that generates superoxide. The protein is Probable respiratory burst oxidase homolog protein I (RBOHI) of Arabidopsis thaliana (Mouse-ear cress).